A 379-amino-acid polypeptide reads, in one-letter code: Serine/threonine-protein kinase spe-6 (379 aa).

In terms of domain architecture, Protein kinase spans 26 to 302; it reads WKVLRNIYSG…SQAATEHQVT (277 aa). ATP is bound by residues 32-40 and K55; that span reads IYSGPFSDV. D147 (proton acceptor) is an active-site residue. The interval 331–379 is disordered; sequence ASAKLDAKDNANESMDIEFDDMPPKEGISKSLSAEKSCTKNVETARTEK. Over residues 360-372 the composition is skewed to polar residues; sequence KSLSAEKSCTKNV.

It belongs to the protein kinase superfamily. CK1 Ser/Thr protein kinase family.

It carries out the reaction L-seryl-[protein] + ATP = O-phospho-L-seryl-[protein] + ADP + H(+). The enzyme catalyses L-threonyl-[protein] + ATP = O-phospho-L-threonyl-[protein] + ADP + H(+). In terms of biological role, serine/threonine-protein kinase which is involved in spermatogenesis. In spermatocytes, regulates meiosis and the localization and assembly of major sperm protein (MSP) into fibrous bodies. In addition, may suppress the initiation of spermiogenesis downstream of spe-8, spe-12, spe-27 and spe-29. This Caenorhabditis elegans protein is Serine/threonine-protein kinase spe-6.